The sequence spans 1576 residues: Proton channel OtopLc (1576 aa).

Disordered stretches follow at residues 1–602 and 621–736; these read MDSS…SSPP and QIGS…SSPV. Low complexity-rich tracts occupy residues 58–67 and 76–85; these read SLAEEVLLLV and LLGQPLPTLT. Composition is skewed to acidic residues over residues 103–116, 159–171, 186–198, and 206–216; these read DEGD…EPVP, DDGE…DAEE, SNPD…EEQE, and PKEEDEEEDDD. Over residues 219–228 the composition is skewed to pro residues; it reads TPPPPLPPLP. Residues 229–241 show a composition bias toward polar residues; sequence SNFSYVQGHNLGQ. Asn-230 is a glycosylation site (N-linked (GlcNAc...) asparagine). The span at 243-252 shows a compositional bias: low complexity; sequence TPPLTKSPSN. A compositionally biased stretch (pro residues) spans 253-264; that stretch reads SPSPPVTPPPCP. Asn-267 carries N-linked (GlcNAc...) asparagine glycosylation. Positions 316 to 341 are enriched in acidic residues; the sequence is DQPEPEDQPPEPENEPEPEPEPEPEP. Over residues 347–356 the composition is skewed to basic and acidic residues; sequence AREDYSRSLD. Residues 362-376 show a composition bias toward polar residues; that stretch reads TTITTPPSNGYSASS. Residues 384 to 393 show a composition bias toward basic and acidic residues; the sequence is HFAELDEDRG. Positions 402–419 are enriched in acidic residues; it reads QEPEEEVEEEEEEEEEEL. The span at 420–433 shows a compositional bias: basic and acidic residues; the sequence is TKETDEISVDRESL. Over residues 434 to 457 the composition is skewed to polar residues; it reads QDQGGDSISSPRPASILTGSISTS. Over residues 465-507 the composition is skewed to low complexity; that stretch reads SPKPESRGPSRSGSQRSQLRSGSQQGSIAESRGGSRIGSRTGS. 2 stretches are compositionally biased toward polar residues: residues 519-534 and 545-555; these read PQAS…SQGQ and KSGSQRMQSPQ. Residues 563–575 are compositionally biased toward pro residues; that stretch reads MPSPPLMRSPPPE. Residues 661 to 685 show a composition bias toward low complexity; sequence AAAAPAVTTTAATTAVTSQPRSHFT. Residues 686–709 are compositionally biased toward basic residues; that stretch reads SSHHHYHLPHQFQHPHHQNHHTHS. The helical transmembrane segment at 741 to 761 threads the bilayer; it reads LFMAGVAPPIAAGAGSLMAMP. A disordered region spans residues 771 to 845; it reads GRVSARSGSQ…GSSSQPALSG (75 aa). Polar residues predominate over residues 776 to 799; sequence RSGSQHHVTIDESSLPSHKGNIQE. Over residues 826–839 the composition is skewed to low complexity; sequence DSSDPPSSPGGSSS. 2 consecutive transmembrane segments (helical) span residues 891-911 and 931-951; these read ALAT…GIAF and LYLY…LIWG. A compositionally biased stretch (polar residues) spans 962–973; sequence PSKSATKASGTD. A disordered region spans residues 962–1001; it reads PSKSATKASGTDSMDESDTDSNSVHHRLPPPIPVRRPSLL. 3 helical membrane passes run 1019–1039, 1051–1071, and 1084–1104; these read GAVA…GQYF, LLAL…YFIF, and IIAR…WLNV. Asn-1121 carries an N-linked (GlcNAc...) asparagine glycan. Helical transmembrane passes span 1179-1199, 1239-1259, 1272-1292, 1310-1330, 1340-1360, 1381-1401, and 1412-1432; these read FLFP…YVMW, FVGI…FVLI, VTIC…VGMI, ILLV…VIAG, LVPI…MFIL, IVTF…LEKS, and FYGL…AIFY. A glycan (N-linked (GlcNAc...) asparagine) is linked at Asn-1479. The disordered stretch occupies residues 1498–1549; sequence EEVDSGESNSAEDAGAGAGSGGSRGSGGGAGAAEAGEAGEEGQQGGDSSCGL. The segment covering 1503-1512 has biased composition (low complexity); sequence GESNSAEDAG. The segment covering 1513–1528 has biased composition (gly residues); it reads AGAGSGGSRGSGGGAG.

Belongs to the otopetrin family.

Its subcellular location is the cell membrane. Proton-selective channel that specifically transports protons into cells. Proton-selective channel activity is probably required in cell types that use changes in intracellular pH for cell signaling or to regulate biochemical or developmental processes. This chain is Proton channel OtopLc, found in Drosophila melanogaster (Fruit fly).